Here is a 310-residue protein sequence, read N- to C-terminus: Small ribosomal subunit biogenesis GTPase RsgA (310 aa).

Residues 77 to 238 (LSKQSHILAA…IIDTPGIKGF (162 aa)) form the CP-type G domain. GTP is bound by residues 126-129 (NKVD) and 180-188 (GHSGVGKST). The Zn(2+) site is built by Cys-262, Cys-267, His-269, and Cys-275.

This sequence belongs to the TRAFAC class YlqF/YawG GTPase family. RsgA subfamily. Monomer. Associates with 30S ribosomal subunit, binds 16S rRNA. Zn(2+) serves as cofactor.

It is found in the cytoplasm. Functionally, one of several proteins that assist in the late maturation steps of the functional core of the 30S ribosomal subunit. Helps release RbfA from mature subunits. May play a role in the assembly of ribosomal proteins into the subunit. Circularly permuted GTPase that catalyzes slow GTP hydrolysis, GTPase activity is stimulated by the 30S ribosomal subunit. The polypeptide is Small ribosomal subunit biogenesis GTPase RsgA (Bacteroides fragilis (strain ATCC 25285 / DSM 2151 / CCUG 4856 / JCM 11019 / LMG 10263 / NCTC 9343 / Onslow / VPI 2553 / EN-2)).